Consider the following 843-residue polypeptide: Translation initiation factor IF-2 (843 aa).

Residues 94-259 are disordered; the sequence is QRSPEEIEAE…AHGFQSPTGP (166 aa). A compositionally biased stretch (basic and acidic residues) spans 96–135; that stretch reads SPEEIEAERKREMDERRAVENAARQKAEEEAKRRAEEDAR. The segment covering 136-177 has biased composition (low complexity); sequence NQPAAGQPASAPAQPVAAAEPVREAPAPAAAAPAPASAAPSA. Basic and acidic residues-rich tracts occupy residues 178-219 and 227-236; these read DARK…EKAP and TTDEESDSFR. The span at 237–250 shows a compositional bias: basic residues; it reads RGGRGKSRLKKRNA. The region spanning 343-512 is the tr-type G domain; it reads SRAPVVTVMG…LLQAEVLELK (170 aa). Residues 352-359 form a G1 region; it reads GHVDHGKT. 352-359 provides a ligand contact to GTP; it reads GHVDHGKT. Residues 377–381 form a G2 region; that stretch reads GITQH. The segment at 398–401 is G3; it reads DTPG. GTP contacts are provided by residues 398–402 and 452–455; these read DTPGH and NKID. A G4 region spans residues 452–455; sequence NKID. Residues 488–490 form a G5 region; the sequence is SAK.

It belongs to the TRAFAC class translation factor GTPase superfamily. Classic translation factor GTPase family. IF-2 subfamily.

Its subcellular location is the cytoplasm. Functionally, one of the essential components for the initiation of protein synthesis. Protects formylmethionyl-tRNA from spontaneous hydrolysis and promotes its binding to the 30S ribosomal subunits. Also involved in the hydrolysis of GTP during the formation of the 70S ribosomal complex. The sequence is that of Translation initiation factor IF-2 from Pseudomonas savastanoi pv. phaseolicola (strain 1448A / Race 6) (Pseudomonas syringae pv. phaseolicola (strain 1448A / Race 6)).